The chain runs to 855 residues: MDLKFSNFFKEAEHPALVKKFDKSTTDESSSKEDYSTMSDLWKMFSKAKSELSNGRRVENLTWRLMSINLQKNLTPNGDSNTLTPDTFSDPTAPSSAQSVPPTSSAETTADNSDTEMKLNPIPAYSVPADTTGSSLMEFNYIQRRVRKTSFDESTAKSKKRSIADSHFPDPNAMQRPHDLESQPFSYPKIHASNSFNFVKRDIDSSNFSNLDASALPISPPSDFFSVHSHNLPNAPPSIPANSNNSASPNQRIKASPKHADTDVLGLDFDMTPSEPSSFPENGGFPSFVDANTHEQTLFPSSATNSFSFEHGSAGFPIPGSVPSTSYHANTASEDGFSSSYNSQGLFGISSPLSSGVTPNQSFFPDVSGNNIFDVSRNNHEVSSPLIQSPGSYVSMPSINMVSSLPISAPVPNSNSQFPRRPNTFRTNSSKSVGQGSSGVDSNQENAESFNPSISSHNSAEWASGETTGHSSNSPLPGSDMFSPQFMRVGTAMGVAPVRSNSSNNFGQNFFHQTSPQFSAVPHRKVSAQDTNLMGSSPGMYNHMPYLNRATSANSITSPGVLPEGMAASLKKRTTNTAATPQAALPTTLDTKKDRSVSFNINKNAEKPTVSNAAEDKKGDANTRRANATNPTPTCTNCQTRTTPLWRRSPDGQPLCNACGLFMKINGVVRPLSLKTDVIKKRNRGVGTSATPKQSGGRKGSTRKSSSKSSSAKSTAADMKPKADSKSISPGFVGGNQSLSSERIPLDPSMRSPLQQQSSENESKSQSMLSANNLNAGVNDFGLGFSEGLGSAHLDSNDSSMVQGKNDFAPVVDSPLFDAFDTDLGMSSVAESHTMNMDPSDLSRVSKSWDWYSVM.

Residues 72–112 (KNLTPNGDSNTLTPDTFSDPTAPSSAQSVPPTSSAETTADN) are compositionally biased toward polar residues. 6 disordered regions span residues 72 to 126 (KNLT…PAYS), 149 to 184 (TSFD…ESQP), 229 to 287 (SHNL…GFPS), 412 to 483 (PNSN…DMFS), 602 to 643 (NKNA…TRTT), and 680 to 768 (KKRN…SQSM). The segment covering 149–168 (TSFDESTAKSKKRSIADSHF) has biased composition (basic and acidic residues). Phosphoserine is present on serine 150. Composition is skewed to low complexity over residues 240–250 (PANSNNSASPN) and 428–444 (NSSK…DSNQ). Residues 445–476 (ENAESFNPSISSHNSAEWASGETTGHSSNSPL) are compositionally biased toward polar residues. Residues 614 to 623 (AEDKKGDANT) show a composition bias toward basic and acidic residues. 2 stretches are compositionally biased toward low complexity: residues 625–643 (RANA…TRTT) and 707–717 (SKSSSAKSTAA). The GATA-type zinc-finger motif lies at 635–659 (CTNCQTRTTPLWRRSPDGQPLCNAC). Serine 727 and serine 729 each carry phosphoserine. Over residues 755–767 (QQQSSENESKSQS) the composition is skewed to low complexity.

The protein localises to the nucleus. Transcriptional activator. The chain is Transcription factor gaf1 (gaf1) from Schizosaccharomyces pombe (strain 972 / ATCC 24843) (Fission yeast).